The sequence spans 221 residues: ATP phosphoribosyltransferase (221 aa).

The protein belongs to the ATP phosphoribosyltransferase family. Short subfamily. Heteromultimer composed of HisG and HisZ subunits.

The protein resides in the cytoplasm. The catalysed reaction is 1-(5-phospho-beta-D-ribosyl)-ATP + diphosphate = 5-phospho-alpha-D-ribose 1-diphosphate + ATP. It participates in amino-acid biosynthesis; L-histidine biosynthesis; L-histidine from 5-phospho-alpha-D-ribose 1-diphosphate: step 1/9. Functionally, catalyzes the condensation of ATP and 5-phosphoribose 1-diphosphate to form N'-(5'-phosphoribosyl)-ATP (PR-ATP). Has a crucial role in the pathway because the rate of histidine biosynthesis seems to be controlled primarily by regulation of HisG enzymatic activity. The sequence is that of ATP phosphoribosyltransferase from Neisseria gonorrhoeae (strain ATCC 700825 / FA 1090).